The following is a 207-amino-acid chain: Outer-membrane lipoprotein LolB (207 aa).

The N-terminal stretch at 1–23 is a signal peptide; sequence MINLRRFTKFTLAGLTALSLLGG. The N-palmitoyl cysteine moiety is linked to residue cysteine 24. A lipid anchor (S-diacylglycerol cysteine) is attached at cysteine 24.

It belongs to the LolB family. As to quaternary structure, monomer.

The protein resides in the cell outer membrane. Functionally, plays a critical role in the incorporation of lipoproteins in the outer membrane after they are released by the LolA protein. The sequence is that of Outer-membrane lipoprotein LolB from Shewanella amazonensis (strain ATCC BAA-1098 / SB2B).